The chain runs to 118 residues: MQHTLTRTASLPERSSSAHSAATALPALRRPPDSCETLVPLLCIFWFVFVSMSPLPPARANKSDNKGLISADRNNKATLLLTIPRCTSKSYTNDLSPLKMTLLSAGKHPRPFRQEHRC.

A compositionally biased stretch (polar residues) spans 1-20; it reads MQHTLTRTASLPERSSSAHS. The segment at 1–26 is disordered; it reads MQHTLTRTASLPERSSSAHSAATALP. A helical transmembrane segment spans residues 38-58; sequence LVPLLCIFWFVFVSMSPLPPA.

The protein resides in the membrane. Functionally, overexpression confers resistance to the antimicrobial peptide MiAMP1. This Saccharomyces cerevisiae (strain ATCC 204508 / S288c) (Baker's yeast) protein is Protein YLR162W.